The sequence spans 217 residues: Uracil-DNA glycosylase (217 aa).

D62 serves as the catalytic Proton acceptor.

This sequence belongs to the uracil-DNA glycosylase (UDG) superfamily. UNG family.

The protein localises to the cytoplasm. The enzyme catalyses Hydrolyzes single-stranded DNA or mismatched double-stranded DNA and polynucleotides, releasing free uracil.. Functionally, excises uracil residues from the DNA which can arise as a result of misincorporation of dUMP residues by DNA polymerase or due to deamination of cytosine. This chain is Uracil-DNA glycosylase, found in Streptococcus gordonii (strain Challis / ATCC 35105 / BCRC 15272 / CH1 / DL1 / V288).